A 184-amino-acid chain; its full sequence is Uroplakin-2 (184 aa).

A signal peptide spans 1–25 (MAPLLPIRTLPLILILLALLSPGAA). The propeptide occupies 26-84 (DFNISSLSGLLSPALTESLLVALPPCHLTGGNATLMVRRANDSKVVTSSFVVPPCRGRR). Residues Asn-28, Asn-57, and Asn-66 are each glycosylated (N-linked (GlcNAc...) asparagine). The Lumenal segment spans residues 85-155 (ELVSVVDSGA…IGLGMARTGG (71 aa)). Residues 156 to 176 (MVVITVLLSVAMFLLVLGFII) traverse the membrane as a helical segment. Residues 177–184 (ALALGSRK) are Cytoplasmic-facing.

It belongs to the uroplakin-2 family. Interacts with uroplakin-1a (UPK1A). As to expression, expressed in ureter.

The protein localises to the cell membrane. Functionally, component of the asymmetric unit membrane (AUM); a highly specialized biomembrane elaborated by terminally differentiated urothelial cells. May play an important role in regulating the assembly of the AUM. The protein is Uroplakin-2 (UPK2) of Homo sapiens (Human).